We begin with the raw amino-acid sequence, 746 residues long: MGDVLSTHLDDARRQHIAEKTGKILTEFLQFYEDQYGVALFNSMRHEIEGTGLPQAQLLWRKVPLDERIVFSGNLFQHQEDSKKWRNRFSLVPHNYGLVLYENKAAYERQVPPRAVINSAGYKILTSVDQYLELIGNSLPGTTAKSGSAPILKCPTQFPLILWHPYARHYYFCMMTEAEQDKWQAVLQDCIRHCNNGIPEDSKVEGPAFTDAIRMYRQSKELYGTWEMLCGNEVQILSNLVMEELGPELKAELGPRLKGKPQERQRQWIQISDAVYHMVYEQAKARFEEVLSKVQQVQPAMQAVIRTDMDQIITSKEHLASKIRAFILPKAEVCVRNHVQPYIPSILEALMVPTSQGFTEVRDVFFKEVTDMNLNVINEGGIDKLGEYMEKLSRLAYHPLKMQSCYEKMESLRLDGLQQRFDVSSTSVFKQRAQIHMREQMDNAVYTFETLLHQELGKGPTKEELCKSIQRVLERVLKKYDYDSSSVRKRFFREALLQISIPFLLKKLAPTCKSELPRFQELIFEDFARFILVENTYEEVVLQTVMKDILQAVKEAAVQRKHNLYRDSMVMHNSDPNLHLLAEGAPIDWGEEYSNSGGGGSPSPSTPESATLSEKRRRAKQVVSVVQDEEVGLPFEASPESPPPASPDGVTEIRGLLAQGLRPESPPPAGPLLNGAPAGESPQPKAAPEASSPPASPLQHLLPGKAVDLGPPKPSDQETGEQVSSPSSHPALHTTTEDSAGVQTEF.

A lipid anchor (N-myristoyl glycine) is attached at G2. The 125-residue stretch at 68–192 (RIVFSGNLFQ…WQAVLQDCIR (125 aa)) folds into the PH domain. 4 positions are modified to phosphoserine: S568, S574, S601, and S603. The disordered stretch occupies residues 590–746 (GEEYSNSGGG…EDSAGVQTEF (157 aa)). The residue at position 606 (T606) is a Phosphothreonine. A phosphoserine mark is found at S609, S624, S638, S641, S646, S665, S681, S692, and S696. Low complexity predominate over residues 671–693 (PLLNGAPAGESPQPKAAPEASSP). Residues 720 to 746 (GEQVSSPSSHPALHTTTEDSAGVQTEF) are compositionally biased toward polar residues.

The protein belongs to the Niban family. In terms of processing, phosphorylated at Ser-641, Ser-646, Ser-692 and Ser-696 by the BRAF/MKK/ERK signaling cascade. In melanoma cells, the C-terminal phosphorylation may prevent targeting to the plasma membrane. Post-translationally, as apoptosis proceeds, degraded via an proteasome-independent pathway, probably by caspases.

It is found in the cytoplasm. The protein localises to the cytosol. The protein resides in the cell junction. Its subcellular location is the adherens junction. It localises to the membrane. Its function is as follows. May play a role in apoptosis suppression. May promote melanoma cell invasion in vitro. This is Protein Niban 2 from Homo sapiens (Human).